A 68-amino-acid chain; its full sequence is Protein SlyX homolog (68 aa).

Belongs to the SlyX family.

This Brucella abortus (strain S19) protein is Protein SlyX homolog.